A 30-amino-acid chain; its full sequence is Cytochrome b6/f complex 12.6 kDa peptide (30 aa).

The interval 1-30 is disordered; that stretch reads SGSGVRSAKKGGKAQGGQAGVGYKGSTEPG. Over residues 13-23 the composition is skewed to gly residues; the sequence is KAQGGQAGVGY.

The protein resides in the plastid. Its subcellular location is the chloroplast. May be a component of the cytochrome b6/f complex which is part of the photosynthetic respiratory chain. This is Cytochrome b6/f complex 12.6 kDa peptide from Euglena gracilis.